A 65-amino-acid polypeptide reads, in one-letter code: Large ribosomal subunit protein bL35 (65 aa).

The span at 1 to 45 (MPKMKSHSGAKKRFKKTGNGKIKRKKANKGHLLTKKNAKRKRQLR) shows a compositional bias: basic residues. A disordered region spans residues 1–65 (MPKMKSHSGA…RDRIKRMLST (65 aa)). The segment covering 48–57 (VVVDDKANRD) has biased composition (basic and acidic residues).

This sequence belongs to the bacterial ribosomal protein bL35 family.

This chain is Large ribosomal subunit protein bL35, found in Salinibacter ruber (strain DSM 13855 / M31).